The chain runs to 224 residues: PKHD-type hydroxylase Tgr7_2199 (224 aa).

One can recognise a Fe2OG dioxygenase domain in the interval 78-176; that stretch reads KLSGAFFARY…RLVAVAWAES (99 aa). The Fe cation site is built by histidine 96, aspartate 98, and histidine 157. Residue arginine 167 coordinates 2-oxoglutarate.

The cofactor is Fe(2+). It depends on L-ascorbate as a cofactor.

This is PKHD-type hydroxylase Tgr7_2199 from Thioalkalivibrio sulfidiphilus (strain HL-EbGR7).